The following is a 144-amino-acid chain: D-aminoacyl-tRNA deacylase (144 aa).

Positions glycine 136–proline 137 match the Gly-cisPro motif, important for rejection of L-amino acids motif.

It belongs to the DTD family. Homodimer.

Its subcellular location is the cytoplasm. The catalysed reaction is glycyl-tRNA(Ala) + H2O = tRNA(Ala) + glycine + H(+). The enzyme catalyses a D-aminoacyl-tRNA + H2O = a tRNA + a D-alpha-amino acid + H(+). In terms of biological role, an aminoacyl-tRNA editing enzyme that deacylates mischarged D-aminoacyl-tRNAs. Also deacylates mischarged glycyl-tRNA(Ala), protecting cells against glycine mischarging by AlaRS. Acts via tRNA-based rather than protein-based catalysis; rejects L-amino acids rather than detecting D-amino acids in the active site. By recycling D-aminoacyl-tRNA to D-amino acids and free tRNA molecules, this enzyme counteracts the toxicity associated with the formation of D-aminoacyl-tRNA entities in vivo and helps enforce protein L-homochirality. The chain is D-aminoacyl-tRNA deacylase from Haemophilus influenzae (strain PittEE).